Here is a 497-residue protein sequence, read N- to C-terminus: Gasdermin-E (497 aa).

A membrane targeting domain region spans residues 1–56 (MFAKATRSFLREVDAEGDLIAVSNLNDSDKSQLLSLVTKKKRFWCWQRPKYQFLSV). S-(2-succinyl)cysteine is present on Cys45. A Glycyl lysine isopeptide (Lys-Gly) (interchain with G-Cter in ubiquitin) cross-link involves residue Lys120. An S-(2-succinyl)cysteine mark is found at Cys156, Cys168, and Cys180. A Glycyl lysine isopeptide (Lys-Gly) (interchain with G-Cter in ubiquitin) cross-link involves residue Lys189. Cys235, Cys371, Cys409, Cys418, and Cys491 each carry S-(2-succinyl)cysteine.

This sequence belongs to the gasdermin family. In terms of assembly, homooligomer; homooligomeric ring-shaped pore complex containing 27-28 subunits when inserted in the membrane. Post-translationally, cleavage at Asp-270 by CASP3 (mature and uncleaved precursor forms) or granzyme B (GZMB) relieves autoinhibition and is sufficient to initiate pyroptosis. Succination by the Krebs cycle intermediate fumarate, which leads to S-(2-succinyl)cysteine residues, inhibits processing by caspases, and ability to initiate pyroptosis. Succination modification is catalyzed by a non-enzymatic reaction caused by an accumulation of fumarate. In terms of processing, ubiquitinated on Lys-120 and Lys-189 via 'Lys-48'-linked polyubiquitin chains, leading to proteasomal degradation. Deubiquitinated by USP48, leading to increased stability. Post-translationally, palmitoylated.

It is found in the cell membrane. The protein resides in the cytoplasm. It localises to the cytosol. Its activity is regulated as follows. The full-length protein before cleavage is inactive: intramolecular interactions between N- and C-terminal domains mediate autoinhibition in the absence of activation signal. The intrinsic pyroptosis-inducing activity is carried by the released N-terminal moiety (Gasdermin-E, N-terminal) following cleavage by CASP3 or granzyme B (GZMB). Activated by NLRP1 in the absence of GSDMD expression: NLRP1 cleaves and activates CASP8, promoting downstream activation of CASP3 and subsequent activation of GSDME. Functionally, precursor of a pore-forming protein that converts non-inflammatory apoptosis to pyroptosis. This form constitutes the precursor of the pore-forming protein: upon cleavage, the released N-terminal moiety (Gasdermin-E, N-terminal) binds to membranes and forms pores, triggering pyroptosis. Its function is as follows. Pore-forming protein produced by cleavage by CASP3 or granzyme B (GZMB), which converts non-inflammatory apoptosis to pyroptosis or promotes granzyme-mediated pyroptosis, respectively. After cleavage, moves to the plasma membrane, homooligomerizes within the membrane and forms pores of 10-15 nanometers (nm) of inner diameter, allowing the release of mature interleukins (IL1B and IL16) and triggering pyroptosis. Binds to inner leaflet lipids, bisphosphorylated phosphatidylinositols, such as phosphatidylinositol (4,5)-bisphosphate. Cleavage by CASP3 switches CASP3-mediated apoptosis induced by TNF or danger signals, such as chemotherapy drugs, to pyroptosis. Mediates secondary necrosis downstream of the mitochondrial apoptotic pathway and CASP3 activation as well as in response to viral agents. Exhibits bactericidal activity. Cleavage by GZMB promotes tumor suppressor activity by triggering robust anti-tumor immunity. Suppresses tumors by mediating granzyme-mediated pyroptosis in target cells of natural killer (NK) cells: cleavage by granzyme B (GZMB), delivered to target cells from NK-cells, triggers pyroptosis of tumor cells and tumor suppression. May play a role in the p53/TP53-regulated cellular response to DNA damage. The polypeptide is Gasdermin-E (Equus caballus (Horse)).